The chain runs to 241 residues: LexA repressor (241 aa).

Positions 41-61 (FREIGNAAGLKSPSSVKHQLQ) form a DNA-binding region, H-T-H motif. Active-site for autocatalytic cleavage activity residues include S165 and K202.

Belongs to the peptidase S24 family. As to quaternary structure, homodimer.

The enzyme catalyses Hydrolysis of Ala-|-Gly bond in repressor LexA.. In terms of biological role, represses a number of genes involved in the response to DNA damage (SOS response), including recA and lexA. In the presence of single-stranded DNA, RecA interacts with LexA causing an autocatalytic cleavage which disrupts the DNA-binding part of LexA, leading to derepression of the SOS regulon and eventually DNA repair. The chain is LexA repressor from Bifidobacterium longum (strain DJO10A).